Here is a 541-residue protein sequence, read N- to C-terminus: Membrane protein insertase YidC (541 aa).

Transmembrane regions (helical) follow at residues 6–26 (NILL…WQAD), 349–369 (FVGN…GLLF), 420–440 (GGCL…WVLL), 457–477 (LSVQ…MFVM), and 500–520 (VIFT…WLVG).

The protein belongs to the OXA1/ALB3/YidC family. Type 1 subfamily. In terms of assembly, interacts with the Sec translocase complex via SecD. Specifically interacts with transmembrane segments of nascent integral membrane proteins during membrane integration.

The protein localises to the cell inner membrane. Required for the insertion and/or proper folding and/or complex formation of integral membrane proteins into the membrane. Involved in integration of membrane proteins that insert both dependently and independently of the Sec translocase complex, as well as at least some lipoproteins. Aids folding of multispanning membrane proteins. The polypeptide is Membrane protein insertase YidC (Shewanella sp. (strain MR-7)).